Reading from the N-terminus, the 375-residue chain is MGSAGARPALAAALLCLARLALGSPCPAVCQCPAAAPQCAPGVGLVPDGCGCCKVCAKQLNEDCSRTQPCDHTKGLECNFGASPAATNGICRAQSEGRPCEYNSKIYQNGESFQPNCKHQCTCIDGAVGCIPLCPQELSLPNLGCPSPRLVKVPGQCCEEWVCDESKDALEELEGFFSKEFGLDASEGELTRNNELIAIVKGGLKMLPVFGSEPQSRAFENPKCIVQTTSWSQCSKTCGTGISTRVTNDNPDCKLIKETRICEVRPCGQPSYASLKKGKKCTKTKKSPSPVRFTYAGCSSVKKYRPKYCGSCVDGRCCTPQQTRTVKIRFRCDDGETFTKSVMMIQSCRCNYNCPHANEAYPFYRLVNDIHKFRD.

An N-terminal signal peptide occupies residues 1–22 (MGSAGARPALAAALLCLARLAL). Residues 23 to 94 (GSPCPAVCQC…AATNGICRAQ (72 aa)) form the IGFBP N-terminal domain. 6 disulfide bridges follow: cysteine 26/cysteine 50, cysteine 30/cysteine 52, cysteine 32/cysteine 53, cysteine 39/cysteine 56, cysteine 64/cysteine 78, and cysteine 70/cysteine 91. Residues 98 to 164 (RPCEYNSKIY…GQCCEEWVCD (67 aa)) form the VWFC domain. The 46-residue stretch at 223–268 (KCIVQTTSWSQCSKTCGTGISTRVTNDNPDCKLIKETRICEVRPCG) folds into the TSP type-1 domain. The heparin-binding stretch occupies residues 274-310 (SLKKGKKCTKTKKSPSPVRFTYAGCSSVKKYRPKYCG). Cystine bridges form between cysteine 281–cysteine 318, cysteine 298–cysteine 332, cysteine 309–cysteine 348, cysteine 312–cysteine 350, and cysteine 317–cysteine 354. Residues 281–355 (CTKTKKSPSP…QSCRCNYNCP (75 aa)) form the CTCK domain.

It belongs to the CCN family.

Its subcellular location is the secreted. In terms of biological role, probable secreted regulatory protein. This is CCN family member 1 (CCN1) from Gallus gallus (Chicken).